A 485-amino-acid polypeptide reads, in one-letter code: Glutamyl-tRNA(Gln) amidotransferase subunit A (485 aa).

Residues Lys79 and Ser154 each act as charge relay system in the active site. The active-site Acyl-ester intermediate is Ser178.

This sequence belongs to the amidase family. GatA subfamily. As to quaternary structure, heterotrimer of A, B and C subunits.

It carries out the reaction L-glutamyl-tRNA(Gln) + L-glutamine + ATP + H2O = L-glutaminyl-tRNA(Gln) + L-glutamate + ADP + phosphate + H(+). Allows the formation of correctly charged Gln-tRNA(Gln) through the transamidation of misacylated Glu-tRNA(Gln) in organisms which lack glutaminyl-tRNA synthetase. The reaction takes place in the presence of glutamine and ATP through an activated gamma-phospho-Glu-tRNA(Gln). This Staphylococcus saprophyticus subsp. saprophyticus (strain ATCC 15305 / DSM 20229 / NCIMB 8711 / NCTC 7292 / S-41) protein is Glutamyl-tRNA(Gln) amidotransferase subunit A.